Here is a 109-residue protein sequence, read N- to C-terminus: Large ribosomal subunit protein uL24 (109 aa).

The protein belongs to the universal ribosomal protein uL24 family. Part of the 50S ribosomal subunit.

One of two assembly initiator proteins, it binds directly to the 5'-end of the 23S rRNA, where it nucleates assembly of the 50S subunit. Its function is as follows. One of the proteins that surrounds the polypeptide exit tunnel on the outside of the subunit. This Syntrophotalea carbinolica (strain DSM 2380 / NBRC 103641 / GraBd1) (Pelobacter carbinolicus) protein is Large ribosomal subunit protein uL24.